The chain runs to 142 residues: Large ribosomal subunit protein uL13 (142 aa).

This sequence belongs to the universal ribosomal protein uL13 family. As to quaternary structure, part of the 50S ribosomal subunit.

Functionally, this protein is one of the early assembly proteins of the 50S ribosomal subunit, although it is not seen to bind rRNA by itself. It is important during the early stages of 50S assembly. The chain is Large ribosomal subunit protein uL13 from Caldicellulosiruptor saccharolyticus (strain ATCC 43494 / DSM 8903 / Tp8T 6331).